Reading from the N-terminus, the 182-residue chain is Oligoribonuclease (182 aa).

The Exonuclease domain maps to 8 to 171 (LIWLDMEMTG…ADIHESIGEL (164 aa)). Y129 is an active-site residue.

Belongs to the oligoribonuclease family.

Its subcellular location is the cytoplasm. In terms of biological role, 3'-to-5' exoribonuclease specific for small oligoribonucleotides. The chain is Oligoribonuclease from Azoarcus sp. (strain BH72).